Reading from the N-terminus, the 136-residue chain is Large ribosomal subunit protein uL16 (136 aa).

The protein belongs to the universal ribosomal protein uL16 family. As to quaternary structure, part of the 50S ribosomal subunit.

Binds 23S rRNA and is also seen to make contacts with the A and possibly P site tRNAs. This chain is Large ribosomal subunit protein uL16, found in Buchnera aphidicola subsp. Acyrthosiphon pisum (strain 5A).